A 337-amino-acid polypeptide reads, in one-letter code: Lipopolysaccharide 1,3-galactosyltransferase (337 aa).

UDP is bound by residues 33-38 (GIDKNF) and 130-131 (DA). Residues D130 and D132 each contribute to the Mg(2+) site. Short sequence motifs (DXD) lie at residues 130 to 132 (DAD) and 219 to 221 (DQD). Residue H264 coordinates Mg(2+). 264-270 (HYIGPTK) provides a ligand contact to UDP.

It belongs to the glycosyltransferase 8 family. The cofactor is Mg(2+).

It carries out the reaction UDP-alpha-D-galactose + [lipopolysaccharide] = UDP + 3-alpha-D-galactosyl-[lipopolysaccharide].. It functions in the pathway bacterial outer membrane biogenesis; LPS core biosynthesis. Its activity is regulated as follows. Inhibited in a competitive manner by closely related nonsubstrate lipopolysaccharides. In terms of biological role, galactosyltransferase involved in the biosynthesis of the core oligosaccharide region of lipopolysaccharide (LPS). Catalyzes the addition of an alpha l,3-linked galactose (galactose I) to the first outer-core glucose (glucose I). Cannot use UDP-glucose. Activity probably does not require the branched galactose added by WaaB, but it is higher in the presence of this branched galactose. The polypeptide is Lipopolysaccharide 1,3-galactosyltransferase (Salmonella typhimurium (strain LT2 / SGSC1412 / ATCC 700720)).